The primary structure comprises 420 residues: Phospholipase A1-II 3 (420 aa).

Residues 1-21 (MCCFLLVSVLLATTLTDVASA) form the signal peptide. The N-linked (GlcNAc...) asparagine glycan is linked to N231. Residue S240 is the Acyl-ester intermediate of the active site. S240 functions as the Charge relay system in the catalytic mechanism. N294 carries N-linked (GlcNAc...) asparagine glycosylation. Active-site charge relay system residues include D305 and H343. A coiled-coil region spans residues 367-388 (VVDRDLALVNKEVDALRDEYQV). N-linked (GlcNAc...) asparagine glycosylation occurs at N403.

Belongs to the AB hydrolase superfamily. Lipase family.

The protein localises to the secreted. Functionally, acylhydrolase that catalyzes the hydrolysis of phospholipids at the sn-1 position. This is Phospholipase A1-II 3 from Oryza sativa subsp. indica (Rice).